The primary structure comprises 303 residues: MIKQRTLKNIIRATGVGLHSGEKVYLTLKPAPVDTGIVFCRTDLDPVVEIPARAENVGETTMSTTLVKGDVKVDTVEHLLSAMAGLGIDNAYVELSASEVPIMDGSAGPFVFLIQSAGLQEQEAAKKFIRIKREVSVEEGDKRAVFVPFDGFKVSFEIDFDHPVFRGRTQQASVDFSSTSFVKEVSRARTFGFMRDIEYLRSQNLALGGSVENAIVVDENRVLNEDGLRYEDEFVKHKILDAIGDLYLLGNSLIGEFRGFKSGHALNNQLLRTLIADKDAWEVVTFEDARTAPISYMRPAAAV.

Zn(2+) is bound by residues His-78, His-237, and Asp-241. The Proton donor role is filled by His-264.

The protein belongs to the LpxC family. Zn(2+) serves as cofactor.

The catalysed reaction is a UDP-3-O-[(3R)-3-hydroxyacyl]-N-acetyl-alpha-D-glucosamine + H2O = a UDP-3-O-[(3R)-3-hydroxyacyl]-alpha-D-glucosamine + acetate. Its pathway is glycolipid biosynthesis; lipid IV(A) biosynthesis; lipid IV(A) from (3R)-3-hydroxytetradecanoyl-[acyl-carrier-protein] and UDP-N-acetyl-alpha-D-glucosamine: step 2/6. Its function is as follows. Catalyzes the hydrolysis of UDP-3-O-myristoyl-N-acetylglucosamine to form UDP-3-O-myristoylglucosamine and acetate, the committed step in lipid A biosynthesis. The chain is UDP-3-O-acyl-N-acetylglucosamine deacetylase from Pseudomonas aeruginosa (strain LESB58).